Here is a 482-residue protein sequence, read N- to C-terminus: Serine carboxypeptidase-like 36 (482 aa).

The first 25 residues, 1–25 (MGKRQDWSVTACIFLFLSLASQIHC), serve as a signal peptide directing secretion. Disulfide bonds link cysteine 119/cysteine 363, cysteine 275/cysteine 286, and cysteine 310/cysteine 331. The active site involves serine 210. Asparagine 228 carries N-linked (GlcNAc...) asparagine glycosylation. 2 N-linked (GlcNAc...) asparagine glycosylation sites follow: asparagine 312 and asparagine 352. The active site involves aspartate 402. 2 N-linked (GlcNAc...) asparagine glycosylation sites follow: asparagine 418 and asparagine 444. Residue histidine 455 is part of the active site.

This sequence belongs to the peptidase S10 family. As to expression, expressed in seedlings, flowers and siliques.

The protein localises to the secreted. Probable carboxypeptidase. The sequence is that of Serine carboxypeptidase-like 36 (SCPL36) from Arabidopsis thaliana (Mouse-ear cress).